Consider the following 244-residue polypeptide: Transcriptional activator protein Anr (244 aa).

21–149 (APLCLPLSLN…RVMSREIRDD (129 aa)) contacts a nucleoside 3',5'-cyclic phosphate. The 74-residue stretch at 159 to 232 (KTADERIATF…GKEVHILDPI (74 aa)) folds into the HTH crp-type domain. Residues 192–211 (RNEIGNYLGLAVETVSRVFT) constitute a DNA-binding region (H-T-H motif).

Functionally, transcriptional activator of anaerobic gene expression. Regulates the expression of the components of the hydrogen cyanide synthase (HcnABC) in a positive manner. May also act as an iron sensor. The sequence is that of Transcriptional activator protein Anr from Pseudomonas protegens (strain DSM 19095 / LMG 27888 / CFBP 6595 / CHA0).